The sequence spans 326 residues: Serpentine receptor class alpha-12 (326 aa).

Over 1-17 (MSCASEVQAQLFTHPVQ) the chain is Extracellular. A helical transmembrane segment spans residues 18-38 (IIYACVQTVLFLATIIGSLLA). Over 39–54 (IVQLCKKTTIPDSTKV) the chain is Cytoplasmic. The helical transmembrane segment at 55–75 (LLIGALFFANAHELAYFSSPF) threads the bilayer. The Extracellular portion of the chain corresponds to 76–101 (KVFKMNLFHTNTSCYPLASTLECIPT). A helical membrane pass occupies residues 102 to 122 (TTVLAMGISGNMLIQSALSIF). Residues 123-138 (RLLATIFPVCYSRMRA) are Cytoplasmic-facing. A helical transmembrane segment spans residues 139-159 (LPGVVLLFMVLIPSFLSYSWI). Residues 160 to 185 (RSDIVLDDYQMFCSQWSANISSRANT) are Extracellular-facing. Residues 186-206 (YLEYCSYLTVAHIIINALIIL) form a helical membrane-spanning segment. The Cytoplasmic portion of the chain corresponds to 207–234 (RNRSVESKCRFDVQQRYLNSETLKTTQT). A helical membrane pass occupies residues 235 to 255 (ICYLSIAQFLAMFLYSGGVLF). Over 256–270 (MRKNQKNIPTLIYIN) the chain is Extracellular. A helical transmembrane segment spans residues 271 to 291 (VIVWVYAPPYACVSLAPLILF). Topologically, residues 292–326 (SLWNLKKQRQIRIQSITVQKETQEDHIRKLQLSWG) are cytoplasmic.

Belongs to the nematode receptor-like protein sra family.

It localises to the membrane. The polypeptide is Serpentine receptor class alpha-12 (Caenorhabditis briggsae).